A 315-amino-acid chain; its full sequence is Outer membrane protease OmpP (315 aa).

The N-terminal stretch at 1–23 is a signal peptide; sequence MQTKLLAIMLAAPVVFSSQEASA. Residues aspartate 103, aspartate 105, aspartate 230, and histidine 232 contribute to the active site.

This sequence belongs to the peptidase A26 family.

It localises to the cell outer membrane. Its function is as follows. Protease; also acts as a receptor for bacteriophage Ox2. The protein is Outer membrane protease OmpP (ompP) of Escherichia coli (strain K12).